The following is a 404-amino-acid chain: Exodeoxyribonuclease 7 large subunit (404 aa).

It belongs to the XseA family. In terms of assembly, heterooligomer composed of large and small subunits.

The protein localises to the cytoplasm. The enzyme catalyses Exonucleolytic cleavage in either 5'- to 3'- or 3'- to 5'-direction to yield nucleoside 5'-phosphates.. Bidirectionally degrades single-stranded DNA into large acid-insoluble oligonucleotides, which are then degraded further into small acid-soluble oligonucleotides. This Tropheryma whipplei (strain TW08/27) (Whipple's bacillus) protein is Exodeoxyribonuclease 7 large subunit.